The sequence spans 245 residues: tRNA pseudouridine synthase A (245 aa).

The active-site Nucleophile is Asp52. Tyr111 provides a ligand contact to substrate.

Belongs to the tRNA pseudouridine synthase TruA family. As to quaternary structure, homodimer.

The enzyme catalyses uridine(38/39/40) in tRNA = pseudouridine(38/39/40) in tRNA. Formation of pseudouridine at positions 38, 39 and 40 in the anticodon stem and loop of transfer RNAs. The chain is tRNA pseudouridine synthase A from Bradyrhizobium diazoefficiens (strain JCM 10833 / BCRC 13528 / IAM 13628 / NBRC 14792 / USDA 110).